The primary structure comprises 336 residues: Glutamyl endopeptidase (336 aa).

The N-terminal stretch at 1–29 is a signal peptide; the sequence is MKGKFLKVSSLFVATLTTATLVSSPAANA. The propeptide occupies 30 to 68; it reads LSSKAMDNHPQQTQSSKQQTPKIQKGGNLKPLEQREHAN. Residues 34–61 are disordered; the sequence is AMDNHPQQTQSSKQQTPKIQKGGNLKPL. Over residues 39–51 the composition is skewed to low complexity; that stretch reads PQQTQSSKQQTPK. Catalysis depends on charge relay system residues His119, Asp161, and Ser237. A disordered region spans residues 283 to 336; that stretch reads FANDDQPNNPDNPDNPNNPDNPNNPDEPNNPDNPNNPDNPDNGDTNNSDNPDAA. Positions 286–336 are enriched in low complexity; sequence DDQPNNPDNPDNPNNPDNPNNPDEPNNPDNPNNPDNPDNGDTNNSDNPDAA. 11 tandem repeats follow at residues 289–291, 292–294, 295–297, 298–300, 301–303, 304–306, 310–312, 313–315, 316–318, 319–321, and 322–324. The interval 289–324 is 11 X 3 AA repeats of P-[DN]-N; it reads PNNPDNPDNPNNPDNPNNPDEPNNPDNPNNPDNPDN.

Belongs to the peptidase S1B family. Post-translationally, proteolytically cleaved by aureolysin (aur). This cleavage leads to the activation of SspA.

Its subcellular location is the secreted. It catalyses the reaction Preferential cleavage: Glu-|-Xaa, Asp-|-Xaa.. In terms of biological role, preferentially cleaves peptide bonds on the carboxyl-terminal side of aspartate and glutamate. Along with other extracellular proteases it is involved in colonization and infection of human tissues. Required for proteolytic maturation of thiol protease SspB and inactivation of SspC, an inhibitor of SspB. It is the most important protease for degradation of fibronectin-binding protein (FnBP) and surface protein A, which are involved in adherence to host cells. May also protect bacteria against host defense mechanism by cleaving the immunoglobulin classes IgG, IgA and IgM. May be involved in the stability of secreted lipases. This Staphylococcus aureus (strain COL) protein is Glutamyl endopeptidase (sspA).